The following is a 130-amino-acid chain: Small ribosomal subunit protein uS9 (130 aa).

Belongs to the universal ribosomal protein uS9 family.

The protein is Small ribosomal subunit protein uS9 of Tolumonas auensis (strain DSM 9187 / NBRC 110442 / TA 4).